The following is a 251-amino-acid chain: uncharacterized protein (251 aa).

4 disordered regions span residues 1 to 93 (MQPG…ASPG), 107 to 152 (GLRS…SRPQ), 169 to 188 (PSSILSAASPGAKLPRVSLS), and 224 to 251 (LQAQNLPSSGPLQARPRPRPHSGLSTPS). Over residues 225 to 234 (QAQNLPSSGP) the composition is skewed to polar residues.

This is an uncharacterized protein from Homo sapiens (Human).